Here is a 658-residue protein sequence, read N- to C-terminus: Heat shock protein homolog SSE1 (658 aa).

Residues 614–627 (KRKEEERKSKKENA) show a composition bias toward basic and acidic residues. The interval 614-658 (KRKEEERKSKKENAQEGTSSKPESKEESEAKEDNDEESDVASIDE) is disordered. Residues 642–658 (EAKEDNDEESDVASIDE) are compositionally biased toward acidic residues.

Belongs to the heat shock protein 70 family.

The protein resides in the cytoplasm. Its function is as follows. Required for normal growth at various temperatures. The protein is Heat shock protein homolog SSE1 (SSE1) of Encephalitozoon cuniculi (strain GB-M1) (Microsporidian parasite).